Reading from the N-terminus, the 320-residue chain is Methylenetetrahydrofolate dehydrogenase [NAD(+)] (320 aa).

C152 is an active-site residue. Residues 187–188 and 210–211 each bind NAD(+); these read RS and DI.

Belongs to the tetrahydrofolate dehydrogenase/cyclohydrolase family. As to quaternary structure, homodimer.

The protein localises to the cytoplasm. It localises to the nucleus. The catalysed reaction is (6R)-5,10-methylene-5,6,7,8-tetrahydrofolate + NAD(+) = (6R)-5,10-methenyltetrahydrofolate + NADH. It functions in the pathway one-carbon metabolism; tetrahydrofolate interconversion. In terms of biological role, catalyzes oxidation of cytoplasmic one-carbon units for purine biosynthesis. The sequence is that of Methylenetetrahydrofolate dehydrogenase [NAD(+)] (mtd1) from Schizosaccharomyces pombe (strain 972 / ATCC 24843) (Fission yeast).